A 474-amino-acid chain; its full sequence is Pyruvate kinase (474 aa).

Substrate is bound at residue R33. K(+)-binding residues include N35, S37, and D67. Residue 35–38 (NFSH) participates in ATP binding. The ATP site is built by R74 and K155. Residue E220 coordinates Mg(2+). 3 residues coordinate substrate: G243, D244, and T276. D244 is a Mg(2+) binding site.

Belongs to the pyruvate kinase family. As to quaternary structure, homotetramer. The cofactor is Mg(2+). K(+) is required as a cofactor.

The catalysed reaction is pyruvate + ATP = phosphoenolpyruvate + ADP + H(+). The protein operates within carbohydrate degradation; glycolysis; pyruvate from D-glyceraldehyde 3-phosphate: step 5/5. The polypeptide is Pyruvate kinase (pyk) (Corynebacterium efficiens (strain DSM 44549 / YS-314 / AJ 12310 / JCM 11189 / NBRC 100395)).